Reading from the N-terminus, the 156-residue chain is Cell division protein SepF (156 aa).

The interval 17 to 44 (PETADYYEDQQPAQQAPAPVPTPAPTRS) is disordered.

This sequence belongs to the SepF family. In terms of assembly, homodimer. Interacts with FtsZ.

Its subcellular location is the cytoplasm. Cell division protein that is part of the divisome complex and is recruited early to the Z-ring. Probably stimulates Z-ring formation, perhaps through the cross-linking of FtsZ protofilaments. Its function overlaps with FtsA. The protein is Cell division protein SepF of Limosilactobacillus fermentum (strain NBRC 3956 / LMG 18251) (Lactobacillus fermentum).